We begin with the raw amino-acid sequence, 211 residues long: Peptidyl-prolyl cis-trans isomerase FKBP14 (211 aa).

An N-terminal signal peptide occupies residues 1 to 19; it reads MRFFLWNAILALWVTVLSG. The cysteines at positions 38 and 96 are disulfide-linked. Residues 45-135 form the PPIase FKBP-type domain; it reads GDLMLVHYEG…IFNIDLLEIR (91 aa). Positions 135–170 constitute an EF-hand 1 domain; that stretch reads RNGPRSHESFQEMDLNDDWRLSKHEVKVYLQKEFEK. Ca(2+)-binding residues include D148, N150, D152, R154, and E159. N176 carries N-linked (GlcNAc...) asparagine glycosylation. Residues 179–211 form the EF-hand 2 domain; the sequence is HHDALVEDIFDKEDEDKDGFISAREFTYVHDEL. D192, D194, D196, and E203 together coordinate Ca(2+). Positions 208–211 match the Prevents secretion from ER motif; that stretch reads HDEL.

As to quaternary structure, monomer. Homodimer. Interacts with type III, type IV and type X collagens.

The protein localises to the endoplasmic reticulum lumen. It carries out the reaction [protein]-peptidylproline (omega=180) = [protein]-peptidylproline (omega=0). With respect to regulation, inhibited by tacrolimus/FK506. PPIase which accelerates the folding of proteins during protein synthesis. Has a preference for substrates containing 4-hydroxylproline modifications, including type III collagen. May also target type VI and type X collagens. The chain is Peptidyl-prolyl cis-trans isomerase FKBP14 (Fkbp14) from Mus musculus (Mouse).